The primary structure comprises 326 residues: Flotillin-like protein FloA (326 aa).

The helical transmembrane segment at 3 to 23 (FTTIVVILLVIACIVVLFFIG) threads the bilayer.

Belongs to the flotillin-like FloA family. Homooligomerizes.

Its subcellular location is the cell membrane. The protein localises to the membrane raft. In terms of biological role, found in functional membrane microdomains (FMM) that may be equivalent to eukaryotic membrane rafts. FMMs are highly dynamic and increase in number as cells age. Flotillins are thought to be important factors in membrane fluidity. The sequence is that of Flotillin-like protein FloA from Desulforapulum autotrophicum (strain ATCC 43914 / DSM 3382 / VKM B-1955 / HRM2) (Desulfobacterium autotrophicum).